A 214-amino-acid chain; its full sequence is Probable nicotinate-nucleotide adenylyltransferase (214 aa).

This sequence belongs to the NadD family.

The enzyme catalyses nicotinate beta-D-ribonucleotide + ATP + H(+) = deamido-NAD(+) + diphosphate. It functions in the pathway cofactor biosynthesis; NAD(+) biosynthesis; deamido-NAD(+) from nicotinate D-ribonucleotide: step 1/1. Catalyzes the reversible adenylation of nicotinate mononucleotide (NaMN) to nicotinic acid adenine dinucleotide (NaAD). The protein is Probable nicotinate-nucleotide adenylyltransferase of Thermomicrobium roseum (strain ATCC 27502 / DSM 5159 / P-2).